A 142-amino-acid polypeptide reads, in one-letter code: Large ribosomal subunit protein uL13 (142 aa).

This sequence belongs to the universal ribosomal protein uL13 family. As to quaternary structure, part of the 50S ribosomal subunit.

Functionally, this protein is one of the early assembly proteins of the 50S ribosomal subunit, although it is not seen to bind rRNA by itself. It is important during the early stages of 50S assembly. The protein is Large ribosomal subunit protein uL13 of Azoarcus sp. (strain BH72).